We begin with the raw amino-acid sequence, 217 residues long: N-(5'-phosphoribosyl)anthranilate isomerase (217 aa).

It belongs to the TrpF family.

The enzyme catalyses N-(5-phospho-beta-D-ribosyl)anthranilate = 1-(2-carboxyphenylamino)-1-deoxy-D-ribulose 5-phosphate. Its pathway is amino-acid biosynthesis; L-tryptophan biosynthesis; L-tryptophan from chorismate: step 3/5. In Synechococcus elongatus (strain ATCC 33912 / PCC 7942 / FACHB-805) (Anacystis nidulans R2), this protein is N-(5'-phosphoribosyl)anthranilate isomerase.